We begin with the raw amino-acid sequence, 124 residues long: Large ribosomal subunit protein bL20 (124 aa).

The protein belongs to the bacterial ribosomal protein bL20 family.

Functionally, binds directly to 23S ribosomal RNA and is necessary for the in vitro assembly process of the 50S ribosomal subunit. It is not involved in the protein synthesizing functions of that subunit. In Ehrlichia chaffeensis (strain ATCC CRL-10679 / Arkansas), this protein is Large ribosomal subunit protein bL20.